Here is a 186-residue protein sequence, read N- to C-terminus: GTP cyclohydrolase 1 (186 aa).

The Zn(2+) site is built by Cys78, His81, and Cys150.

The protein belongs to the GTP cyclohydrolase I family. As to quaternary structure, toroid-shaped homodecamer, composed of two pentamers of five dimers.

It catalyses the reaction GTP + H2O = 7,8-dihydroneopterin 3'-triphosphate + formate + H(+). It functions in the pathway cofactor biosynthesis; 7,8-dihydroneopterin triphosphate biosynthesis; 7,8-dihydroneopterin triphosphate from GTP: step 1/1. The sequence is that of GTP cyclohydrolase 1 from Enterococcus faecalis (strain ATCC 700802 / V583).